The chain runs to 387 residues: Exodeoxyribonuclease 7 large subunit (387 aa).

This sequence belongs to the XseA family. Heterooligomer composed of large and small subunits.

It is found in the cytoplasm. It carries out the reaction Exonucleolytic cleavage in either 5'- to 3'- or 3'- to 5'-direction to yield nucleoside 5'-phosphates.. Its function is as follows. Bidirectionally degrades single-stranded DNA into large acid-insoluble oligonucleotides, which are then degraded further into small acid-soluble oligonucleotides. The chain is Exodeoxyribonuclease 7 large subunit from Campylobacter jejuni subsp. jejuni serotype O:2 (strain ATCC 700819 / NCTC 11168).